Here is a 956-residue protein sequence, read N- to C-terminus: Glycine dehydrogenase (decarboxylating) 2 (956 aa).

Position 706 is an N6-(pyridoxal phosphate)lysine (lysine 706).

It belongs to the GcvP family. As to quaternary structure, the glycine cleavage system is composed of four proteins: P, T, L and H. Pyridoxal 5'-phosphate serves as cofactor.

The enzyme catalyses N(6)-[(R)-lipoyl]-L-lysyl-[glycine-cleavage complex H protein] + glycine + H(+) = N(6)-[(R)-S(8)-aminomethyldihydrolipoyl]-L-lysyl-[glycine-cleavage complex H protein] + CO2. Functionally, the glycine cleavage system catalyzes the degradation of glycine. The P protein binds the alpha-amino group of glycine through its pyridoxal phosphate cofactor; CO(2) is released and the remaining methylamine moiety is then transferred to the lipoamide cofactor of the H protein. The sequence is that of Glycine dehydrogenase (decarboxylating) 2 from Colwellia psychrerythraea (strain 34H / ATCC BAA-681) (Vibrio psychroerythus).